The following is a 1042-amino-acid chain: Sarcoplasmic/endoplasmic reticulum calcium ATPase 2 (1042 aa).

The Cytoplasmic segment spans residues 1–48; that stretch reads MENAHTKTVEEVLGHFGVNESTGLSLEQVKKLKERWGSNELPAEEGKT. A Phosphoserine modification is found at Ser38. A helical membrane pass occupies residues 49 to 69; that stretch reads LLELVIEQFEDLLVRILLLAA. At 70–89 the chain is on the lumenal side; that stretch reads CISFVLAWFEEGEETITAFV. The helical transmembrane segment at 90–110 threads the bilayer; that stretch reads EPFVILLILVANAIVGVWQER. The Cytoplasmic portion of the chain corresponds to 111 to 253; sequence NAENAIEALK…QERTPLQQKL (143 aa). Residues 254-273 form a helical membrane-spanning segment; that stretch reads DEFGEQLSKVISLICIAVWI. Over 274-295 the chain is Lumenal; that stretch reads INIGHFNDPVHGGSWIRGAIYY. A 3'-nitrotyrosine mark is found at Tyr294 and Tyr295. Residues 296-313 traverse the membrane as a helical segment; it reads FKIAVALAVAAIPEGLPA. The Ca(2+) site is built by Val304, Ala305, Ile307, and Glu309. The Cytoplasmic segment spans residues 314 to 756; the sequence is VITTCLALGT…EEGRAIYNNM (443 aa). The 4-aspartylphosphate intermediate role is filled by Asp351. 2 residues coordinate Mg(2+): Asp351 and Thr353. ATP is bound at residue Thr353. Thr441 carries the post-translational modification Phosphothreonine. The ATP site is built by Glu442, Arg489, and Lys514. At Ser531 the chain carries Phosphoserine. Residue Arg559 coordinates ATP. The interaction with HAX1 stretch occupies residues 575–594; the sequence is MNLEDSANFIKYETNLTFVG. Ser580 carries the post-translational modification Phosphoserine. Residues Thr624, Gly625, and Asp626 each coordinate ATP. Ser663 bears the Phosphoserine mark. Residues Arg677 and Lys683 each contribute to the ATP site. Position 702 (Asp702) interacts with Mg(2+). Asn705 contributes to the ATP binding site. Residues 757–776 traverse the membrane as a helical segment; that stretch reads KQFIRYLISSNVGEVVCIFL. Ca(2+) is bound by residues Asn767 and Glu770. Residues 777–786 are Lumenal-facing; that stretch reads TAALGFPEAL. A helical membrane pass occupies residues 787–807; sequence IPVQLLWVNLVTDGLPATALG. Residues 787 to 807 are interaction with PLN; sequence IPVQLLWVNLVTDGLPATALG. The segment at 788-1042 is interaction with TMEM64 and PDIA3; that stretch reads PVQLLWVNLV…DTNFSDMFWS (255 aa). The Ca(2+) site is built by Asn795, Thr798, and Asp799. Topologically, residues 808 to 827 are cytoplasmic; the sequence is FNPPDLDIMNKPPRNPKEPL. Residues 828–850 form a helical membrane-spanning segment; the sequence is ISGWLFFRYLAIGCYVGAATVGA. At 851-896 the chain is on the lumenal side; sequence AAWWFIAADGGPRVTFYQLSHFLQCKEDNPDFEGVDCAVFESPYPM. Residues Cys875 and Cys887 are joined by a disulfide bond. A helical transmembrane segment spans residues 897 to 916; that stretch reads TMALSVLVTIEMCNALNSLS. Glu907 serves as a coordination point for Ca(2+). At 917 to 929 the chain is on the cytoplasmic side; it reads ENQSLLRMPPWEN. The helical transmembrane segment at 930–948 threads the bilayer; sequence IWLVGSICLSMSLHFLILY. Residues 931-942 are interaction with PLN; it reads WLVGSICLSMSL. Over 949-963 the chain is Lumenal; the sequence is VEPLPLIFQITPLNL. A helical transmembrane segment spans residues 964–984; the sequence is TQWLMVLKISLPVILMDETLK. Residues 985 to 1042 are Cytoplasmic-facing; it reads FVARNYLEPGKECVQPATKSCSFSACTDGISWPFVLLIMPLVIWVYSTDTNFSDMFWS.

Belongs to the cation transport ATPase (P-type) (TC 3.A.3) family. Type IIA subfamily. As to quaternary structure, interacts with sarcolipin (SLN); the interaction inhibits ATP2A2 Ca(2+) affinity. Interacts with phospholamban (PLN); the interaction inhibits ATP2A2 Ca(2+) affinity. Interacts with myoregulin (MRLN). Interacts with ARLN and ERLN; the interactions inhibit ATP2A2 Ca(2+) affinity. Interacts with STRIT1/DWORF; the interaction results in activation of ATP2A2. Interacts with the monomeric forms of SLN, PLN, ARLN, ERLN and STRI1/DWORF. Interacts with HAX1. Interacts with S100A8 and S100A9. Interacts with SLC35G1 and STIM1. Interacts with TMEM203. Interacts with TMEM64 and PDIA3. Interacts with TMX1. Interacts with TMX2. Interacts with VMP1; VMP1 competes with PLN and SLN to prevent them from forming an inhibitory complex with ATP2A2. Interacts with ULK1. Interacts with S100A1 in a Ca(2+)-dependent manner. Interacts with TUNAR. Interacts with FLVCR2; this interaction occurs in the absence of heme and promotes ATP2A2 proteasomal degradation; this complex is dissociated upon heme binding. Interacts with FNIP1. In terms of assembly, interacts with TRAM2 (via C-terminus). Mg(2+) serves as cofactor. Nitrated under oxidative stress. Nitration on the two tyrosine residues inhibits catalytic activity. In terms of processing, serotonylated on Gln residues by TGM2 in response to hypoxia, leading to its inactivation. As to expression, detected in heart left ventricle (at protein level). Isoform 2 is highly expressed in heart and slow twitch skeletal muscle. Isoform 1 is widely expressed.

The protein resides in the endoplasmic reticulum membrane. Its subcellular location is the sarcoplasmic reticulum membrane. The enzyme catalyses Ca(2+)(in) + ATP + H2O = Ca(2+)(out) + ADP + phosphate + H(+). With respect to regulation, has different conformational states with differential Ca2+ affinity. The E1 conformational state (active form) shows high Ca(2+) affinity, while the E2 state exhibits low Ca(2+) affinity. Binding of ATP allosterically increases its affinity for subsequent binding of Ca2+. Reversibly inhibited by phospholamban (PLN) at low calcium concentrations. PLN inhibits ATP2A2 Ca(2+) affinity by disrupting its allosteric activation by ATP. Inhibited by sarcolipin (SLN) and myoregulin (MRLN). The inhibition is blocked by VMP1. Enhanced by STRIT1/DWORF; STRIT1 increases activity by displacing sarcolipin (SLN), phospholamban (PLN) and myoregulin (MRLN). Stabilizes SERCA2 in its E2 state. In terms of biological role, this magnesium-dependent enzyme catalyzes the hydrolysis of ATP coupled with the translocation of calcium from the cytosol to the sarcoplasmic reticulum lumen. Involved in autophagy in response to starvation. Upon interaction with VMP1 and activation, controls ER-isolation membrane contacts for autophagosome formation. Also modulates ER contacts with lipid droplets, mitochondria and endosomes. In coordination with FLVCR2 mediates heme-stimulated switching from mitochondrial ATP synthesis to thermogenesis. Functionally, involved in the regulation of the contraction/relaxation cycle. Acts as a regulator of TNFSF11-mediated Ca(2+) signaling pathways via its interaction with TMEM64 which is critical for the TNFSF11-induced CREB1 activation and mitochondrial ROS generation necessary for proper osteoclast generation. Association between TMEM64 and SERCA2 in the ER leads to cytosolic Ca(2+) spiking for activation of NFATC1 and production of mitochondrial ROS, thereby triggering Ca(2+) signaling cascades that promote osteoclast differentiation and activation. This Sus scrofa (Pig) protein is Sarcoplasmic/endoplasmic reticulum calcium ATPase 2 (ATP2A2).